Reading from the N-terminus, the 208-residue chain is Probable splicing factor, arginine/serine-rich 5 (208 aa).

The region spanning 2–74 (PRLYLGKIPY…MRLVVEMARG (73 aa)) is the RRM domain. A disordered region spans residues 71–208 (MARGKPRGND…RSPSPGSPKD (138 aa)). Basic residues predominate over residues 84–123 (SRSPRRRSRSPRRRSRTPPRRRSRSRDRKRSRRSRSRSSS). Over residues 128–153 (PVRESRRRSESRSPSPKRDLKREASR) the composition is skewed to basic and acidic residues.

It belongs to the splicing factor SR family. In terms of processing, extensively phosphorylated on serine residues in the RS domain.

Its subcellular location is the nucleus. Plays a functionally redundant role in shifting germ cell sexual differentiation in hermaphrodites. The protein is Probable splicing factor, arginine/serine-rich 5 (rsp-5) of Caenorhabditis elegans.